The primary structure comprises 206 residues: Sclerostin domain-containing protein 1 (206 aa).

The signal sequence occupies residues 1–23; it reads MLPPAIHLSLIPLLCILMKNCLA. The interval 42–62 is disordered; the sequence is AHPSSNSTLNQARNGGRHFSS. The segment covering 43–62 has biased composition (polar residues); sequence HPSSNSTLNQARNGGRHFSS. N47 carries an N-linked (GlcNAc...) asparagine glycan. Cystine bridges form between C75–C133, C89–C147, C100–C163, and C104–C165. The CTCK domain occupies 75 to 170; it reads CRELRSTKYI…TACKCKRYTR (96 aa). N173 carries an N-linked (GlcNAc...) asparagine glycan. The disordered stretch occupies residues 176-206; sequence SHNFESVSPAKPAQHHRERKRASKSSKHSLS. Basic residues predominate over residues 188-206; sequence AQHHRERKRASKSSKHSLS.

It belongs to the sclerostin family. Interacts with BMP2, BMP4, BMP6 and BMP7 with high affinity. Highly expressed within the maximally sensitized/receptive endometrium. Weakly expressed in brain, kidney and the female reproductive tract. Expressed in the dermal papilla (DP) and at high level in the precortex of both anagen vibrissae and pelage follicles. Dynymic expression during the hair cycle.

It is found in the secreted. Directly antagonizes activity of BMP2, BMP4, BMP6 and BMP7 in a dose-dependent manner. May be involved in the onset of endometrial receptivity for implantation/sensitization for the decidual cell reaction. Enhances Wnt signaling and inhibits TGF-beta signaling. The polypeptide is Sclerostin domain-containing protein 1 (Sostdc1) (Rattus norvegicus (Rat)).